Here is a 414-residue protein sequence, read N- to C-terminus: Sensor protein CutS (414 aa).

The span at 1–15 shows a compositional bias: pro residues; sequence MATTPAPPGAPPKPT. The interval 1-21 is disordered; the sequence is MATTPAPPGAPPKPTWDPRSA. Transmembrane regions (helical) follow at residues 37–57 and 121–141; these read LLYG…IYLL and SLLA…AMAG. Residues 142–194 enclose the HAMP domain; it reads RVLSPLGRITRTARAVAGSDLSRRIELDGPDDELKELADTFDDMLERLQRAFT. Residues 202-414 form the Histidine kinase domain; it reads NASHELRTPL…GLVMRVTLPV (213 aa). H205 is modified (phosphohistidine; by autocatalysis).

It is found in the cell membrane. It carries out the reaction ATP + protein L-histidine = ADP + protein N-phospho-L-histidine.. Member of the two-component regulatory system CutS/CutR, involved in the regulation of copper metabolism. The chain is Sensor protein CutS (cutS) from Streptomyces coelicolor (strain ATCC BAA-471 / A3(2) / M145).